Consider the following 909-residue polypeptide: Myb-like protein Q (909 aa).

Disordered stretches follow at residues 15-65 (TTNN…QQQQ), 84-149 (QQQN…QQIL), and 216-280 (SAPS…KGPW). A compositionally biased stretch (low complexity) spans 17–46 (NNNSNNNNNNNNNNNNNNNNNNNNNINQNH). Residues 47–56 (QHQHQHHHHQ) show a composition bias toward basic residues. A compositionally biased stretch (low complexity) spans 84–126 (QQQNYGESTTSTSMIPPSITTSLTPLTPTLSSQPQNIQQQQQQ). The span at 127–139 (QHHHQQQHHHHHQ) shows a compositional bias: basic residues. The segment covering 216-226 (SAPSTPLSMSP) has biased composition (polar residues). HTH myb-type domains follow at residues 272 to 327 (SPGI…SPEV) and 328 to 378 (RKTN…LKKI). 2 DNA-binding regions (H-T-H motif) span residues 300 to 323 (WSSI…FNHL) and 351 to 374 (WTAI…NSTL). Residues 379 to 389 (GGDSKSLNKEK) are compositionally biased toward basic and acidic residues. Disordered stretches follow at residues 379-482 (GGDS…NTAI), 497-531 (QTTP…QTQQ), 616-642 (SMEQ…QQQQ), 672-748 (YQQQ…HPIE), and 826-855 (LNTT…IPTP). Over residues 390 to 401 (DDDDDDDEDAED) the composition is skewed to acidic residues. Low complexity-rich tracts occupy residues 415-431 (SSSS…TNSS) and 444-482 (STTT…NTAI). The span at 497-508 (QTTPNSSPSLSS) shows a compositional bias: polar residues. Composition is skewed to low complexity over residues 622 to 642 (YQQQ…QQQQ), 672 to 726 (YQQQ…QQQQ), 733 to 744 (NSNNTDTTFSNS), and 826 to 851 (LNTT…NNNN).

The protein localises to the nucleus. The sequence is that of Myb-like protein Q (mybQ) from Dictyostelium discoideum (Social amoeba).